A 508-amino-acid chain; its full sequence is Glutamate--cysteine ligase, chloroplastic (508 aa).

Residues 1–59 (MTTIFRLASSSSPSLRHDATPHNFHIRKTSISNTFSFSSKNSLSFKRILTSGGSRRFIV) constitute a chloroplast transit peptide. 2 disulfide bridges follow: C172-C392 and C335-C350.

The protein belongs to the carboxylate-amine ligase family. Glutamate--cysteine ligase type 2 subfamily. In terms of assembly, homodimer or monomer when oxidized or reduced, respectively. In terms of processing, the Cys-172-Cys-392 disulfide bridge is known to modulate the enzyme activity according to the redox status. The oxidized form constitutes the active enzyme.

It is found in the plastid. It localises to the chloroplast. The catalysed reaction is L-cysteine + L-glutamate + ATP = gamma-L-glutamyl-L-cysteine + ADP + phosphate + H(+). It participates in sulfur metabolism; glutathione biosynthesis; glutathione from L-cysteine and L-glutamate: step 1/2. This is Glutamate--cysteine ligase, chloroplastic (GSH1) from Medicago truncatula (Barrel medic).